The following is a 504-amino-acid chain: 26S proteasome non-ATPase regulatory subunit 3 (504 aa).

A PCI domain is found at 254 to 433; the sequence is ARYMYYQGRI…RDGPRYMQSS (180 aa).

The protein belongs to the proteasome subunit S3 family. In terms of assembly, the 26S proteasome is composed of a core protease, known as the 20S proteasome, capped at one or both ends by the 19S regulatory complex (RC). The RC is composed of at least 18 different subunits in two subcomplexes, the base and the lid, which form the portions proximal and distal to the 20S proteolytic core, respectively.

Its function is as follows. Acts as a regulatory subunit of the 26 proteasome which is involved in the ATP-dependent degradation of ubiquitinated proteins. The sequence is that of 26S proteasome non-ATPase regulatory subunit 3 (rpn-3) from Caenorhabditis elegans.